The following is a 327-amino-acid chain: Cobalamin biosynthesis protein CobD (327 aa).

A run of 4 helical transmembrane segments spans residues 61-78 (MWLTVGLVAACIFAGLVI), 80-102 (SILPHAGTAGAIAEVVIVAILLA), 160-182 (GIVAPAFWFLVGGLPGLFAYKFI), and 300-322 (AALVLFWSTMSLMTGLVIAASLV).

It belongs to the CobD/CbiB family.

The protein localises to the cell membrane. It participates in cofactor biosynthesis; adenosylcobalamin biosynthesis. In terms of biological role, converts cobyric acid to cobinamide by the addition of aminopropanol on the F carboxylic group. This is Cobalamin biosynthesis protein CobD from Brucella melitensis biotype 1 (strain ATCC 23456 / CCUG 17765 / NCTC 10094 / 16M).